Consider the following 338-residue polypeptide: MAQLGAVVAVAASFFCASLFSAVHKIEEGHIGVYYRGGALLTSTSGPGFHLMLPFITSYKSVQTTLQTDEVKNVPCGTSGGVMIYFDRIEVVNFLVPHAVYDIVKNYTADYDKALIFNKIHHELNQFCSVHTLQEVYIELFDQIDENLKLALQQDLTSMAPGLVIQAVRVTKPNIPEAIRRNYELMESEKTKLLIAAQKQKVVEKEAETERKKALIEAEKVAQVAEITFGQKVMEKETEKRISEIEDAAFLAREKAKADAECYTAMKIAEANKLKLTPEYLQLMKYKAIASNSKIYFGKDIPNMFMDSAGGVGKQFEGLADKLSFVLEDEPMEADSEN.

Topologically, residues 1-3 are cytoplasmic; sequence MAQ. Residues 4-24 form a helical membrane-spanning segment; sequence LGAVVAVAASFFCASLFSAVH. Topologically, residues 25–338 are lumenal; that stretch reads KIEEGHIGVY…DEPMEADSEN (314 aa). Asparagine 106 carries an N-linked (GlcNAc...) asparagine glycan. The interval 177–309 is interaction with ERLIN1; that stretch reads EAIRRNYELM…DIPNMFMDSA (133 aa). Lysine 267 carries the N6-acetyllysine modification.

This sequence belongs to the band 7/mec-2 family. In terms of assembly, forms a heteromeric complex with ERLIN1. In complex with ERLIN1, interacts with RNF170. Interacts with activated ITPR1, independently of the degree of ITPR1 polyubiquitination. Interacts with SCAP, INSIG1, SREBF1 and SREBF2 under cholesterol sufficiency conditions; indicative for an association with the SCAP-SREBP-INSIG complex. Probably part of an AMFR/gp78 and INSIG1-containing ubiquitin ligase complex involved in ERAD of HMGCR. Interacts with TMUB1; TMUB1 bridges the association with AMFR. Interacts with SYVN1 and RNF139. Interacts with TMEM259. Interacts with TMEM41B. Post-translationally, deubiquitinated by USP25; leading to stabilization.

The protein resides in the endoplasmic reticulum membrane. In terms of biological role, component of the ERLIN1/ERLIN2 complex which mediates the endoplasmic reticulum-associated degradation (ERAD) of inositol 1,4,5-trisphosphate receptors (IP3Rs) such as ITPR1. Promotes sterol-accelerated ERAD of HMGCR probably implicating an AMFR/gp78-containing ubiquitin ligase complex. Involved in regulation of cellular cholesterol homeostasis by regulation the SREBP signaling pathway. May promote ER retention of the SCAP-SREBF complex. In Bos taurus (Bovine), this protein is Erlin-2 (ERLIN2).